Reading from the N-terminus, the 178-residue chain is MKLLAPVLWAMAALGVTWLVAVDSKESCTKHSNGCSTPLRLPCQEYFRPACDIHDNCYHCGKTFGISREECDKAFLKDMNTLCKKLGSNSATCPARGKREVTSHRATSIAHSRLWKTALDQKSFLNRKARQVFFLLPTTCQGWAKNYHLAVKLAGANSYSVTTDLETCQGLEHCLPNH.

An N-terminal signal peptide occupies residues Met-1–Ser-24. 4-hydroxyproline is present on Pro-38. Residues Pro-42 and Pro-49 each carry the 4-hydroxyproline; partial modification. Residue His-54 is part of the active site. Positions Lys-98 to Arg-130 are cleaved as a propeptide — interchain peptide. Gln-131 is subject to Pyrrolidone carboxylic acid. 4-hydroxyproline; partial is present on Pro-137.

This sequence belongs to the phospholipase A2 family. Group IX subfamily. As to quaternary structure, heterodimer of an alpha and a beta chain; probably disulfide-linked. Requires Ca(2+) as cofactor. As to expression, expressed by the venom duct.

The protein localises to the secreted. It carries out the reaction a 1,2-diacyl-sn-glycero-3-phosphocholine + H2O = a 1-acyl-sn-glycero-3-phosphocholine + a fatty acid + H(+). In terms of biological role, catalyzes the calcium-dependent hydrolysis of the 2-acyl groups in 3-sn-phosphoglycerides. The protein is Conodipine-P3 of Conus purpurascens (Purple cone).